A 250-amino-acid chain; its full sequence is Putative B3 domain-containing protein At4g03170 (250 aa).

A compositionally biased stretch (polar residues) spans 1-12 (MANSTGKPTSST). The interval 1-90 (MANSTGKPTS…EKNQPKRFKK (90 aa)) is disordered. Over residues 34–56 (DREEDIDDEDDIDDEVIDDEDYE) the composition is skewed to acidic residues. Positions 72–84 (QSREREEETEKNQ) are enriched in basic and acidic residues. Residues 137–245 (KKQLMSSDVD…KLCFAIHYVK (109 aa)) constitute a DNA-binding region (TF-B3).

The protein localises to the nucleus. The protein is Putative B3 domain-containing protein At4g03170 of Arabidopsis thaliana (Mouse-ear cress).